We begin with the raw amino-acid sequence, 149 residues long: Azurin (149 aa).

Positions 1–20 are cleaved as a signal peptide; that stretch reads MLAKATLAIVLSAASLPVLA. The 129-residue stretch at 21-149 folds into the Plastocyanin-like domain; that stretch reads AQCEATIESN…MMKGTLKLSN (129 aa). Residues C23 and C46 are joined by a disulfide bond. Positions 66, 132, 137, and 141 each coordinate Cu cation.

The protein localises to the periplasm. Functionally, transfers electrons from cytochrome c551 to cytochrome oxidase. This is Azurin (azu) from Achromobacter denitrificans (Alcaligenes denitrificans).